The primary structure comprises 470 residues: Outer capsid protein sigma-1 (470 aa).

The interval 1 to 324 (MDASLITEIR…LELDTANNRV (324 aa)) is tail. Asn-21 carries an N-linked (GlcNAc...) asparagine; by host glycan. Residues 26–46 (KEIEEIKKQVQVNVDDIRAAN) adopt a coiled-coil conformation. N-linked (GlcNAc...) asparagine; by host glycans are attached at residues Asn-121, Asn-205, and Asn-353. Positions 325–470 (QVADRFGMRT…WTIMYPCNVR (146 aa)) are head.

Belongs to the orthoreovirus sigma-1 protein family. As to quaternary structure, homotrimer. Interacts (via the head region) with human F11R. Undergoes dramatic conformational rearrangements during viral disassembly in the endocytic pathway.

Its subcellular location is the virion. In terms of biological role, fiber-like molecule that attaches the virion to the host cell membrane by binding to the primary receptor F11R/JAM-A and to sialic acid containing proteins (coreceptor). The interaction of sigma-1 with F11R is required for NF-kB activation and apoptosis. Binding to both sialic acid and F11R is required to induce maximal levels of apoptosis. The polypeptide is Outer capsid protein sigma-1 (S1) (Reovirus type 1 (strain Lang) (T1L)).